A 161-amino-acid polypeptide reads, in one-letter code: Cyclic pyranopterin monophosphate synthase (161 aa).

Residues 73-75 (LCH) and 110-111 (ME) contribute to the substrate site. D125 is a catalytic residue.

Belongs to the MoaC family. As to quaternary structure, homohexamer; trimer of dimers.

It catalyses the reaction (8S)-3',8-cyclo-7,8-dihydroguanosine 5'-triphosphate = cyclic pyranopterin phosphate + diphosphate. Its pathway is cofactor biosynthesis; molybdopterin biosynthesis. Its function is as follows. Catalyzes the conversion of (8S)-3',8-cyclo-7,8-dihydroguanosine 5'-triphosphate to cyclic pyranopterin monophosphate (cPMP). This chain is Cyclic pyranopterin monophosphate synthase, found in Pseudomonas syringae pv. tomato (strain ATCC BAA-871 / DC3000).